The following is a 696-amino-acid chain: PWWP domain-containing DNA repair factor 3B (696 aa).

Polar residues-rich tracts occupy residues 119 to 128 (QNVPQKQSDS) and 290 to 300 (CLDTSQNQPSM). Disordered regions lie at residues 119–143 (QNVP…DLPG) and 278–303 (NIED…MESE). Phosphoserine is present on S128. The PWWP domain maps to 392–453 (TGMIVWFKYQ…KKFDCKEKQM (62 aa)).

This sequence belongs to the PWWP3A family.

The protein is PWWP domain-containing DNA repair factor 3B of Homo sapiens (Human).